The sequence spans 368 residues: MDKPMKRIFVVLVILLVLPQLALAIRIKDIASFDGVRDNQLIGYGLIVGLNGTGDSDQTKFPVQSLANVLERMGITVNRDDIKVKNVAAVMVTAELPPFSKQGTRVDVLVSSLGDAKSLAGGTLLMTPLKGADGQVYAVAQGGLLTNSFSYGGQAATAQKNHPTAGRIPNGALVERELPNVLADRSQLRLNLHQPDFTTATRIARAVNEQFKAGVASCNDPGSVVISLPDAYQGRVVEFVADMERLEVRPDNPAKVVLNERTGTIVIGENVRIDTVAVSHGNLTLLIKETPRVSQPQPLSRTGETVVVPRTGIKVSEESGGLAVLREGASIGDVVRALNALGVTPRDLIGILQAIKAAGAMQAELSVI.

A signal peptide spans Met-1–Ala-24.

The protein belongs to the FlgI family. As to quaternary structure, the basal body constitutes a major portion of the flagellar organelle and consists of four rings (L,P,S, and M) mounted on a central rod.

The protein resides in the periplasm. It is found in the bacterial flagellum basal body. Its function is as follows. Assembles around the rod to form the L-ring and probably protects the motor/basal body from shearing forces during rotation. In Geobacter sulfurreducens (strain ATCC 51573 / DSM 12127 / PCA), this protein is Flagellar P-ring protein.